The following is an 83-amino-acid chain: Small ribosomal subunit protein bS16 (83 aa).

Belongs to the bacterial ribosomal protein bS16 family.

The sequence is that of Small ribosomal subunit protein bS16 from Acinetobacter baumannii (strain AB307-0294).